The sequence spans 188 residues: Probable manganese efflux pump MntP (188 aa).

6 helical membrane-spanning segments follow: residues 3–23 (FTAT…ASIG), 41–61 (LIFG…GILA), 66–86 (LEWN…RMII), 106–128 (WLLV…GLAF), 143–163 (ATLI…PMLG), and 168–188 (ILGG…HFHG).

The protein belongs to the MntP (TC 9.B.29) family.

The protein resides in the cell inner membrane. Functionally, probably functions as a manganese efflux pump. The sequence is that of Probable manganese efflux pump MntP from Salmonella typhimurium (strain LT2 / SGSC1412 / ATCC 700720).